The following is a 290-amino-acid chain: MILFNLLETQLTRVHSFQEMIKKASVYRHPLANHLMDPEVQKESREDGDDRTVVAEIMRRCFVPAFVTTIPWEGFHFAGHEIRINEATDCYGAVVWPSALVLCYFLETNVKQYNLVDKNVIEIGAGTGLVSIVASLLGAHVTATDLPELLGNLQYNISRNTKTKAKHLPQVKELSWGVALDKNFPRASINFDYILAADVVYAHPFLEELLVTFDHLCKETTVILWVMKFRLEKENKFVDRFEQLFDLEEISSFPSLNIKLYKAMKKNQKSACYPQRRMWKAKPISGRLLL.

S-adenosyl-L-methionine-binding positions include Trp-96, 124–126, Asp-145, Trp-176, and Ala-197; that span reads GAG.

It belongs to the methyltransferase superfamily. METTL21 family.

Functionally, protein-lysine methyltransferase. This is Protein-lysine methyltransferase METTL21E (METTL21E) from Bos taurus (Bovine).